Consider the following 141-residue polypeptide: Ribosome maturation factor RimP (141 aa).

Belongs to the RimP family.

It is found in the cytoplasm. In terms of biological role, required for maturation of 30S ribosomal subunits. The sequence is that of Ribosome maturation factor RimP from Laribacter hongkongensis (strain HLHK9).